Here is a 336-residue protein sequence, read N- to C-terminus: DNA-directed RNA polymerase subunit alpha (336 aa).

An alpha N-terminal domain (alpha-NTD) region spans residues 1 to 226 (MLIAQRPTLS…ELFGLARELN (226 aa)). Positions 243 to 336 (LAADMALPIE…SDDAFGDDEL (94 aa)) are alpha C-terminal domain (alpha-CTD).

The protein belongs to the RNA polymerase alpha chain family. Homodimer. The RNAP catalytic core consists of 2 alpha, 1 beta, 1 beta' and 1 omega subunit. When a sigma factor is associated with the core the holoenzyme is formed, which can initiate transcription.

It catalyses the reaction RNA(n) + a ribonucleoside 5'-triphosphate = RNA(n+1) + diphosphate. In terms of biological role, DNA-dependent RNA polymerase catalyzes the transcription of DNA into RNA using the four ribonucleoside triphosphates as substrates. The sequence is that of DNA-directed RNA polymerase subunit alpha from Renibacterium salmoninarum (strain ATCC 33209 / DSM 20767 / JCM 11484 / NBRC 15589 / NCIMB 2235).